Here is a 554-residue protein sequence, read N- to C-terminus: D-3-phosphoglycerate dehydrogenase (554 aa).

NAD(+)-binding positions include 177-178, Asp197, 256-258, and Asp282; these read KI and CSR. Residue Arg258 is part of the active site. Glu287 is an active-site residue. Catalysis depends on His305, which acts as the Proton donor. Residue 305 to 308 participates in NAD(+) binding; sequence HLGA. One can recognise an ACT domain in the interval 482-554; the sequence is MLFTLHRDMP…GIRDAYTVKL (73 aa).

Belongs to the D-isomer specific 2-hydroxyacid dehydrogenase family.

The catalysed reaction is (2R)-3-phosphoglycerate + NAD(+) = 3-phosphooxypyruvate + NADH + H(+). The enzyme catalyses (R)-2-hydroxyglutarate + NAD(+) = 2-oxoglutarate + NADH + H(+). It functions in the pathway amino-acid biosynthesis; L-serine biosynthesis; L-serine from 3-phospho-D-glycerate: step 1/3. In terms of biological role, catalyzes the reversible oxidation of 3-phospho-D-glycerate to 3-phosphonooxypyruvate, the first step of the phosphorylated L-serine biosynthesis pathway. Also catalyzes the reversible oxidation of 2-hydroxyglutarate to 2-oxoglutarate. The sequence is that of D-3-phosphoglycerate dehydrogenase (serA) from Synechocystis sp. (strain ATCC 27184 / PCC 6803 / Kazusa).